The chain runs to 327 residues: METKTVAITMGDPAGIGPEIIVKALSEDGLNGAPLVVIGCLATLKCLQAKGITPNVELRAIERVAEARFAPGIIHVIDEPLAQPEALEAGKVQAQAGDLAYRCVKRATELALRGDVQAIATAPLNKEALHLAGHNYPGHTELLATLTHSRDYAMVLYTDKLKVIHVSTHIALRKFLDTLSTTRVETVIGIADTFLKRVGYVKPRIAVAGVNPHAGENGLFGDEETRILTPAITDARAKGMDVYGPCPPDTVFLQAYEGQYDMVVAMYHDQGHIPLKLLGFYDGVNITAGLPFIRTSADHGTAFDIAWTGKAKSESMAVSIKLAMQLA.

The substrate site is built by His-139 and Thr-140. A divalent metal cation contacts are provided by His-169, His-213, and His-268. Substrate is bound by residues Lys-276, Asn-285, and Arg-294.

Belongs to the PdxA family. PdxA2 subfamily. Homodimer. Requires a divalent metal cation as cofactor.

The catalysed reaction is 4-O-phospho-D-threonate + NAD(+) = dihydroxyacetone phosphate + CO2 + NADH. Its function is as follows. Catalyzes the NAD-dependent oxidation and subsequent decarboxylation of D-threonate 4-phosphate to produce dihydroxyacetone phosphate (DHAP). The protein is Putative D-threonate 4-phosphate dehydrogenase of Salmonella typhi.